A 269-amino-acid polypeptide reads, in one-letter code: Ribosomal RNA large subunit methyltransferase E (269 aa).

Residues G58, W60, D78, D96, and D120 each contribute to the S-adenosyl-L-methionine site. The active-site Proton acceptor is the K160. Positions 234-269 are disordered; it reads HEKKEGNETSDNDEDNNKNGLMIKKIKELRGKRSKL. Basic and acidic residues predominate over residues 258-269; sequence KIKELRGKRSKL.

Belongs to the class I-like SAM-binding methyltransferase superfamily. RNA methyltransferase RlmE family.

Its subcellular location is the cytoplasm. The enzyme catalyses uridine(2552) in 23S rRNA + S-adenosyl-L-methionine = 2'-O-methyluridine(2552) in 23S rRNA + S-adenosyl-L-homocysteine + H(+). Specifically methylates the uridine in position 2552 of 23S rRNA at the 2'-O position of the ribose in the fully assembled 50S ribosomal subunit. The sequence is that of Ribosomal RNA large subunit methyltransferase E from Methanococcus aeolicus (strain ATCC BAA-1280 / DSM 17508 / OCM 812 / Nankai-3).